A 161-amino-acid chain; its full sequence is Arachidonate 5-lipoxygenase-activating protein (161 aa).

The Lumenal segment spans residues Met1 to Asn8. A helical transmembrane segment spans residues Val9–Val30. Topologically, residues Glu31–Arg52 are cytoplasmic. The helical transmembrane segment at Val53–Leu77 threads the bilayer. Over Cys78 to Gln80 the chain is Lumenal. A helical transmembrane segment spans residues Val81–Leu102. The Cytoplasmic portion of the chain corresponds to Gly103–Gln107. The stretch at Ser108 to Gly115 is an intramembrane region. A helical transmembrane segment spans residues Lys116–Ala128. Residues Gly129 to Pro161 are Lumenal-facing.

The protein belongs to the MAPEG family. Homotrimer. Interacts with LTC4S and ALOX5.

Its subcellular location is the nucleus membrane. It is found in the endoplasmic reticulum membrane. Its function is as follows. Required for leukotriene biosynthesis by ALOX5 (5-lipoxygenase). Anchors ALOX5 to the membrane. Binds arachidonic acid, and could play an essential role in the transfer of arachidonic acid to ALOX5. Binds to MK-886, a compound that blocks the biosynthesis of leukotrienes. The chain is Arachidonate 5-lipoxygenase-activating protein (ALOX5AP) from Macaca fascicularis (Crab-eating macaque).